The chain runs to 301 residues: Phosducin-like protein (301 aa).

Thr2 is modified (N-acetylthreonine). Residues 15–53 (YYYSSSEEEDSDHEDKDRGRGALAGSSMPADADLAGEGI) are disordered. A phosphoserine mark is found at Ser20, Ser25, Ser226, Ser293, and Ser296. One can recognise a Phosducin domain in the interval 37–299 (LAGSSMPADA…TCHSEDSDLE (263 aa)). The thioredoxin fold stretch occupies residues 158-301 (FKQVFEIPSG…HSEDSDLEID (144 aa)).

The protein belongs to the phosducin family. In terms of assembly, forms a complex with the beta and gamma subunits of the GTP-binding protein, transducin. Interacts with the CCT chaperonin complex.

The protein resides in the cell projection. It is found in the cilium. In terms of biological role, functions as a co-chaperone for CCT in the assembly of heterotrimeric G protein complexes, facilitates the assembly of both Gbeta-Ggamma and RGS-Gbeta5 heterodimers. Also acts as a positive regulator of hedgehog signaling and regulates ciliary function. The protein is Phosducin-like protein (PDCL) of Bos taurus (Bovine).